A 242-amino-acid chain; its full sequence is Probable transcriptional regulatory protein XCV3282 (242 aa).

The protein belongs to the TACO1 family.

It is found in the cytoplasm. The sequence is that of Probable transcriptional regulatory protein XCV3282 from Xanthomonas euvesicatoria pv. vesicatoria (strain 85-10) (Xanthomonas campestris pv. vesicatoria).